Consider the following 471-residue polypeptide: Phosphatidate cytidylyltransferase 3 (471 aa).

The tract at residues 1-72 is disordered; it reads MAMEKDLSPN…HRRRSSENLA (72 aa). The span at 21-35 shows a compositional bias: polar residues; the sequence is SYPTTPTSRMNTNNQ. 8 helical membrane passes run 97 to 116, 120 to 139, 149 to 169, 196 to 216, 228 to 250, 255 to 277, 293 to 313, and 368 to 388; these read WIRT…IIYM, YIWA…LFFL, LPGF…FVYG, YQMV…ILTL, YAWT…ANIF, WFLL…GFYF, GFIG…NVLG, and FSLG…ASGF.

This sequence belongs to the CDS family. Requires Mg(2+) as cofactor.

It is found in the membrane. The catalysed reaction is a 1,2-diacyl-sn-glycero-3-phosphate + CTP + H(+) = a CDP-1,2-diacyl-sn-glycerol + diphosphate. It participates in phospholipid metabolism; CDP-diacylglycerol biosynthesis; CDP-diacylglycerol from sn-glycerol 3-phosphate: step 3/3. In terms of biological role, may be involved in the synthesis of minor phospholipids and in modulation of IP3-mediated signal transduction. This chain is Phosphatidate cytidylyltransferase 3, found in Arabidopsis thaliana (Mouse-ear cress).